The chain runs to 363 residues: Putative agmatine deiminase (363 aa).

A compositionally biased stretch (polar residues) spans 1-10 (MTKQLSTSPK). The segment at 1–20 (MTKQLSTSPKQDGFRMPAEH) is disordered. C355 functions as the Amidino-cysteine intermediate in the catalytic mechanism.

The protein belongs to the agmatine deiminase family.

The catalysed reaction is agmatine + H2O = N-carbamoylputrescine + NH4(+). The protein is Putative agmatine deiminase of Photobacterium profundum (strain SS9).